The following is a 529-amino-acid chain: uncharacterized protein (529 aa).

It to M.jannaschii MJ1451.

This is an uncharacterized protein from Methanothermobacter thermautotrophicus (strain ATCC 29096 / DSM 1053 / JCM 10044 / NBRC 100330 / Delta H) (Methanobacterium thermoautotrophicum).